We begin with the raw amino-acid sequence, 251 residues long: MDTTPASRGQWPVGIMSSVINVFASGKSCNSGGAPRSSVRRGHRAGAARDKSRGFDAPPRRPKGGVHPATTSKDPNKDIRGPPAPTPHKKYRGPAIPGEGRSGVHTTRPRRRAGRSGGMDPRQLVAQPQQRWAKTEIPTERRAEIDGLLPSLLNTLDGQIQGDAALLRYCVGAIKRELRRRWESVQPAHHVAASSGKPSPQLFNEAAQNAEDLSGDGKGCAGQSVQQEVLHSGSGVPPVCADCGKPAANKW.

A disordered region spans residues 25–134 (SGKSCNSGGA…VAQPQQRWAK (110 aa)). Positions 108 to 122 (RPRRRAGRSGGMDPR) match the Nuclear localization signal motif. Positions 149–153 (LPSLL) match the Nuclear export signal motif.

In terms of assembly, homooligomer. Interacts with host FIB2; this interaction, is required for ORF3 protein transiting through host Cajal body and nucleolus, relocalization of fibrillarin to the cytoplasm, and in presence of viral RNA, leads to the formation of stable RNPs.

Its subcellular location is the host cytoplasm. It is found in the host nucleus. The protein localises to the host nucleolus. Its function is as follows. Protects and provides long-distance movement to viral RNA. Self associates and binds viral RNA and fibrillarin to form filamentous ribonucleoproteins (RNPs) protected from RNase. ORF3 protein actually fulfills functions that are usually provided by capsid protein, which is absent from umbraviruses' genome. This chain is Long-distance movement protein (ORF3), found in Clitoria (Hyacinth bean).